The chain runs to 310 residues: Carbamate kinase 1 (310 aa).

In terms of assembly, homodimer (predominantly) and homotetramer.

The protein resides in the cytoplasm. It carries out the reaction hydrogencarbonate + NH4(+) + ATP = carbamoyl phosphate + ADP + H2O + H(+). It participates in metabolic intermediate metabolism; carbamoyl phosphate degradation; CO(2) and NH(3) from carbamoyl phosphate: step 1/1. Inhibited by adenosine(5')pentaphospho(5')adenosine (Ap5A), Ap6A and to a much lower extent by Ap4A. Functionally, catalyzes the reversible synthesis of carbamate and ATP from carbamoyl phosphate and ADP. Can also catalyze, although with low efficiency, the phosphorylation of bicarbonate, leading to the formation of carboxyphosphate, an unstable intermediate found in the reactions catalyzed by carbamoyl-phosphate synthase and biotin carboxylase. Can also use acetate. The chain is Carbamate kinase 1 (arcC1) from Enterococcus faecium (Streptococcus faecium).